A 145-amino-acid polypeptide reads, in one-letter code: UPF0260 protein VS_0923 (145 aa).

It belongs to the UPF0260 family.

The protein is UPF0260 protein VS_0923 of Vibrio atlanticus (strain LGP32) (Vibrio splendidus (strain Mel32)).